Here is a 218-residue protein sequence, read N- to C-terminus: UPF0173 metal-dependent hydrolase Mpal_1063 (218 aa).

The protein belongs to the UPF0173 family.

This Methanosphaerula palustris (strain ATCC BAA-1556 / DSM 19958 / E1-9c) protein is UPF0173 metal-dependent hydrolase Mpal_1063.